The primary structure comprises 250 residues: 1-(5-phosphoribosyl)-5-[(5-phosphoribosylamino)methylideneamino] imidazole-4-carboxamide isomerase (250 aa).

The active-site Proton acceptor is D8. D129 (proton donor) is an active-site residue.

The protein belongs to the HisA/HisF family.

Its subcellular location is the cytoplasm. The catalysed reaction is 1-(5-phospho-beta-D-ribosyl)-5-[(5-phospho-beta-D-ribosylamino)methylideneamino]imidazole-4-carboxamide = 5-[(5-phospho-1-deoxy-D-ribulos-1-ylimino)methylamino]-1-(5-phospho-beta-D-ribosyl)imidazole-4-carboxamide. It functions in the pathway amino-acid biosynthesis; L-histidine biosynthesis; L-histidine from 5-phospho-alpha-D-ribose 1-diphosphate: step 4/9. This Desulfovibrio desulfuricans (strain ATCC 27774 / DSM 6949 / MB) protein is 1-(5-phosphoribosyl)-5-[(5-phosphoribosylamino)methylideneamino] imidazole-4-carboxamide isomerase.